Reading from the N-terminus, the 364-residue chain is UDP-N-acetylglucosamine--N-acetylmuramyl-(pentapeptide) pyrophosphoryl-undecaprenol N-acetylglucosamine transferase (364 aa).

UDP-N-acetyl-alpha-D-glucosamine-binding positions include threonine 10–glycine 12, asparagine 128, arginine 170, serine 199, isoleucine 250, and glutamine 295.

The protein belongs to the glycosyltransferase 28 family. MurG subfamily.

The protein localises to the cell inner membrane. The catalysed reaction is di-trans,octa-cis-undecaprenyl diphospho-N-acetyl-alpha-D-muramoyl-L-alanyl-D-glutamyl-meso-2,6-diaminopimeloyl-D-alanyl-D-alanine + UDP-N-acetyl-alpha-D-glucosamine = di-trans,octa-cis-undecaprenyl diphospho-[N-acetyl-alpha-D-glucosaminyl-(1-&gt;4)]-N-acetyl-alpha-D-muramoyl-L-alanyl-D-glutamyl-meso-2,6-diaminopimeloyl-D-alanyl-D-alanine + UDP + H(+). It participates in cell wall biogenesis; peptidoglycan biosynthesis. In terms of biological role, cell wall formation. Catalyzes the transfer of a GlcNAc subunit on undecaprenyl-pyrophosphoryl-MurNAc-pentapeptide (lipid intermediate I) to form undecaprenyl-pyrophosphoryl-MurNAc-(pentapeptide)GlcNAc (lipid intermediate II). This chain is UDP-N-acetylglucosamine--N-acetylmuramyl-(pentapeptide) pyrophosphoryl-undecaprenol N-acetylglucosamine transferase, found in Chlorobium phaeobacteroides (strain DSM 266 / SMG 266 / 2430).